Here is a 482-residue protein sequence, read N- to C-terminus: Alanine aminotransferase 2 (482 aa).

The residue at position 299 (Lys-299) is an N6-(pyridoxal phosphate)lysine.

This sequence belongs to the class-I pyridoxal-phosphate-dependent aminotransferase family. Alanine aminotransferase subfamily. Homodimer. Pyridoxal 5'-phosphate serves as cofactor.

It carries out the reaction L-alanine + 2-oxoglutarate = pyruvate + L-glutamate. The protein operates within photosynthesis; C4 acid pathway. It functions in the pathway amino-acid degradation; L-alanine degradation via transaminase pathway; pyruvate from L-alanine: step 1/1. Functionally, transfer of C3 units between the cytosol of mesophyll and bundle sheath cells to maintain a nitrogen-carbon balance in the C4-dicarboxylic pathway. This Hordeum vulgare (Barley) protein is Alanine aminotransferase 2.